We begin with the raw amino-acid sequence, 299 residues long: Sulfate adenylyltransferase subunit 2 (299 aa).

It belongs to the PAPS reductase family. CysD subfamily. In terms of assembly, heterodimer composed of CysD, the smaller subunit, and CysN.

The catalysed reaction is sulfate + ATP + H(+) = adenosine 5'-phosphosulfate + diphosphate. It functions in the pathway sulfur metabolism; hydrogen sulfide biosynthesis; sulfite from sulfate: step 1/3. Its function is as follows. With CysN forms the ATP sulfurylase (ATPS) that catalyzes the adenylation of sulfate producing adenosine 5'-phosphosulfate (APS) and diphosphate, the first enzymatic step in sulfur assimilation pathway. APS synthesis involves the formation of a high-energy phosphoric-sulfuric acid anhydride bond driven by GTP hydrolysis by CysN coupled to ATP hydrolysis by CysD. The protein is Sulfate adenylyltransferase subunit 2 of Colwellia psychrerythraea (strain 34H / ATCC BAA-681) (Vibrio psychroerythus).